The chain runs to 811 residues: Elongation factor G, mitochondrial (811 aa).

Residues 1–64 (MSAIARAAAR…FQQSFQRRWA (64 aa)) constitute a mitochondrion transit peptide. In terms of domain architecture, tr-type G spans 96 to 394 (RRQRNVGISA…GVCAYLPNPS (299 aa)). Residues 105–112 (AHIDSGKT), 192–196 (DTPGH), and 246–249 (NKMD) each bind GTP.

It belongs to the TRAFAC class translation factor GTPase superfamily. Classic translation factor GTPase family. EF-G/EF-2 subfamily.

It is found in the mitochondrion. It functions in the pathway protein biosynthesis; polypeptide chain elongation. Mitochondrial GTPase that catalyzes the GTP-dependent ribosomal translocation step during translation elongation. During this step, the ribosome changes from the pre-translocational (PRE) to the post-translocational (POST) state as the newly formed A-site-bound peptidyl-tRNA and P-site-bound deacylated tRNA move to the P and E sites, respectively. Catalyzes the coordinated movement of the two tRNA molecules, the mRNA and conformational changes in the ribosome. This is Elongation factor G, mitochondrial from Cryptococcus neoformans var. neoformans serotype D (strain B-3501A) (Filobasidiella neoformans).